The chain runs to 194 residues: Large ribosomal subunit protein eL15 (194 aa).

Positions 164-194 (SAGKKGRGLRNKGIGAEKVRPSIRAHGRRGK) are disordered. The segment covering 184–194 (PSIRAHGRRGK) has biased composition (basic residues).

This sequence belongs to the eukaryotic ribosomal protein eL15 family.

The polypeptide is Large ribosomal subunit protein eL15 (rpl15e) (Methanocaldococcus jannaschii (strain ATCC 43067 / DSM 2661 / JAL-1 / JCM 10045 / NBRC 100440) (Methanococcus jannaschii)).